We begin with the raw amino-acid sequence, 401 residues long: Nicotinate phosphoribosyltransferase (401 aa).

His-221 carries the phosphohistidine; by autocatalysis modification.

Belongs to the NAPRTase family. Transiently phosphorylated on a His residue during the reaction cycle. Phosphorylation strongly increases the affinity for substrates and increases the rate of nicotinate D-ribonucleotide production. Dephosphorylation regenerates the low-affinity form of the enzyme, leading to product release.

It catalyses the reaction nicotinate + 5-phospho-alpha-D-ribose 1-diphosphate + ATP + H2O = nicotinate beta-D-ribonucleotide + ADP + phosphate + diphosphate. Its pathway is cofactor biosynthesis; NAD(+) biosynthesis; nicotinate D-ribonucleotide from nicotinate: step 1/1. Catalyzes the synthesis of beta-nicotinate D-ribonucleotide from nicotinate and 5-phospho-D-ribose 1-phosphate at the expense of ATP. The chain is Nicotinate phosphoribosyltransferase from Pectobacterium carotovorum subsp. carotovorum (strain PC1).